The sequence spans 500 residues: Ferulic acid decarboxylase 1 (500 aa).

The Mn(2+) site is built by N168, H191, and E233. Residues 168 to 173 (NWSIAR), 190 to 191 (QH), and E233 each bind prenylated FMN. The Proton donor role is filled by E282. Residue K391 participates in prenylated FMN binding.

It belongs to the UbiD family. UbiD-like/FDC subfamily. Homodimer. May form higher order oligomers. Mn(2+) serves as cofactor. Requires prenylated FMN as cofactor.

Its subcellular location is the cytoplasm. The enzyme catalyses (E)-4-coumarate + H(+) = 4-vinylphenol + CO2. It catalyses the reaction (E)-cinnamate + H(+) = styrene + CO2. The catalysed reaction is (E)-ferulate + H(+) = 2-methoxy-4-vinylphenol + CO2. In terms of biological role, catalyzes the reversible decarboxylation of aromatic carboxylic acids like ferulic acid, p-coumaric acid or cinnamic acid, producing the corresponding vinyl derivatives 4-vinylphenol, 4-vinylguaiacol, and styrene, respectively, which play the role of aroma metabolites. This is Ferulic acid decarboxylase 1 from Aspergillus niger (strain ATCC MYA-4892 / CBS 513.88 / FGSC A1513).